A 106-amino-acid chain; its full sequence is Large ribosomal subunit protein eL42A (106 aa).

An N6-methyllysine; by RKM3 modification is found at K40. Residue K55 is modified to N6-methyllysine; by RKM4.

It belongs to the eukaryotic ribosomal protein eL42 family. Component of the large ribosomal subunit (LSU). Mature yeast ribosomes consist of a small (40S) and a large (60S) subunit. The 40S small subunit contains 1 molecule of ribosomal RNA (18S rRNA) and 33 different proteins (encoded by 57 genes). The large 60S subunit contains 3 rRNA molecules (25S, 5.8S and 5S rRNA) and 46 different proteins (encoded by 81 genes). In terms of processing, in wild-type cells, 78% of L42 is monomethylated at both Lys-40 and Lys-55, and 22% are a mixture of species with either residue monomethylated.

The protein localises to the cytoplasm. Its function is as follows. Component of the ribosome, a large ribonucleoprotein complex responsible for the synthesis of proteins in the cell. The small ribosomal subunit (SSU) binds messenger RNAs (mRNAs) and translates the encoded message by selecting cognate aminoacyl-transfer RNA (tRNA) molecules. The large subunit (LSU) contains the ribosomal catalytic site termed the peptidyl transferase center (PTC), which catalyzes the formation of peptide bonds, thereby polymerizing the amino acids delivered by tRNAs into a polypeptide chain. The nascent polypeptides leave the ribosome through a tunnel in the LSU and interact with protein factors that function in enzymatic processing, targeting, and the membrane insertion of nascent chains at the exit of the ribosomal tunnel. This chain is Large ribosomal subunit protein eL42A, found in Saccharomyces cerevisiae (strain ATCC 204508 / S288c) (Baker's yeast).